A 486-amino-acid polypeptide reads, in one-letter code: MASIRELHQQLVKKERSAVEITQEALERIEALEPKLHSFLCVTAERALEQAGAVDAKIAAGEEIGLLAGIPVGIKDNLCTKGIPTTCASRILENFVPPYESTATQKLADAGAVMVGKTNLDEFAMGSSTENSAYQVTANPWNLSRVPGGSSGGSAAAVSSQECVVALGSDTGGSIRQPASFCGVVGMKPTYGLVSRYGLVAYASSLDQIGPFANTVEDAAILLNAIAGHDPKDSTSLKVAIPNYAASFKPDFKPRGQLRIGIVKETFGEGLDSVVEQAVTKAVDVLQSLGAEIHIISCPRFRYGLPTYYIIAPSEASANLARYDGVKYGYRAPDADNLLSMYTRTRATGFGTEVKRRIMIGTYALSAGYYDAYYLKAQKVRTLIKEDFEKAFRVVDVLVCPTSPTTAFKAGEKTTDPLSMYLTDLMTIPVNLAGLPSLSLPCGFDDQGLPIGLQLIGNVLREDQLFQVAYAYEQATTWHLRKPQIS.

Active-site charge relay system residues include lysine 75 and serine 150. Serine 174 (acyl-ester intermediate) is an active-site residue.

This sequence belongs to the amidase family. GatA subfamily. In terms of assembly, heterotrimer of A, B and C subunits.

The enzyme catalyses L-glutamyl-tRNA(Gln) + L-glutamine + ATP + H2O = L-glutaminyl-tRNA(Gln) + L-glutamate + ADP + phosphate + H(+). Allows the formation of correctly charged Gln-tRNA(Gln) through the transamidation of misacylated Glu-tRNA(Gln) in organisms which lack glutaminyl-tRNA synthetase. The reaction takes place in the presence of glutamine and ATP through an activated gamma-phospho-Glu-tRNA(Gln). The chain is Glutamyl-tRNA(Gln) amidotransferase subunit A from Nostoc punctiforme (strain ATCC 29133 / PCC 73102).